We begin with the raw amino-acid sequence, 157 residues long: Arginine repressor (157 aa).

It belongs to the ArgR family.

Its subcellular location is the cytoplasm. The protein operates within amino-acid biosynthesis; L-arginine biosynthesis [regulation]. In terms of biological role, regulates arginine biosynthesis genes. The polypeptide is Arginine repressor (Bacteroides fragilis (strain YCH46)).